Consider the following 458-residue polypeptide: MTLSEDTLRAVEATAGLIAAQGIEFTRAFYERMLTKNEELKNIFNLAHQRTLRQPKALLDSLVAYALNIRRINELYELKGKGLPVPPEHWAELQGFFSAAERVANKHTSFGIQPAQYQIVGAHLLATIEDRITKDKDILAEWAKAYQFLADLFIKREEEIYAATEGCKGGWRQTRTFRVEEKTRVNEIICKFRLVPAEEGAGVVEHRPGQYLAIFVRSPEHFQHQQIRQYSIISAPNSAYYEIAVHRDEKGTVSRYLHDYVSTGDLLEVAPPYGDFFLRYLEADEQAPADTQASQEFQMLQSGAINFAAEKTMPIVLISGGIGQTPLLSMLRFLAQKEGKETARPIFWIHAAHNSRVRAFKEEVDAIRETALPSLRVVTFLSEVRATDREGEDYDFAGRINLDRISELTKLEADNANPHYFFVGPTGFMTAVEEQLKTKSVPNSRIHFEMFGPFKASH.

The Globin domain maps to 2 to 158; sequence TLSEDTLRAV…LADLFIKREE (157 aa). Heme b is bound at residue H107. Catalysis depends on charge relay system residues Y117 and E157. The interval 169-457 is reductase; the sequence is GGWRQTRTFR…FEMFGPFKAS (289 aa). One can recognise an FAD-binding FR-type domain in the interval 172-279; sequence RQTRTFRVEE…APPYGDFFLR (108 aa). FAD is bound by residues Y211 and 228-231; that span reads RQYS. An NADP(+)-binding site is contributed by 321 to 326; sequence GIGQTP. 450 to 453 contacts FAD; sequence MFGP.

This sequence belongs to the globin family. Two-domain flavohemoproteins subfamily. The protein in the C-terminal section; belongs to the flavoprotein pyridine nucleotide cytochrome reductase family. In terms of assembly, monomer. Heme b serves as cofactor. Requires FAD as cofactor.

The enzyme catalyses 2 nitric oxide + NADPH + 2 O2 = 2 nitrate + NADP(+) + H(+). The catalysed reaction is 2 nitric oxide + NADH + 2 O2 = 2 nitrate + NAD(+) + H(+). In terms of biological role, flavohemoprotein involved in nitric oxide (NO) detoxification in an aerobic process, termed nitric oxide dioxygenase (NOD) reaction that utilizes O(2) and NAD(P)H to convert NO to nitrate, which protects the protozoan parasite from various noxious nitrogen compounds. Therefore, plays a central role in the inducible response to nitrosative stress. May also be involved in O(2) detoxification. This Giardia intestinalis (strain ATCC 50803 / WB clone C6) (Giardia lamblia) protein is Flavohemoprotein (hmpA).